Reading from the N-terminus, the 255-residue chain is MKFLLIASNKDLASKNIANHIKEYFDVFETDKELLSLTAEDLEYADYYIFLSKHKSIANKPSLTVHTPGNLTEDNTFGGNPKEVCPCDAVLNTLLLKNIYKNYKTYYEDGKIGEFDVSFEVVHHSPTGLKAPTVFVEIGSSEKEWILKEAGEIIAKSVLETIDAMKSKNYDKKVRAIGFGGGHYAPKFTKLALEDKYYFGYLVPKYASVSEDVLNQLISKMEVDKALIDWKGCRGDDKRRYIEFFENNGIEWERV.

It belongs to the DtdA deacylase family. In terms of assembly, monomer. It depends on Zn(2+) as a cofactor.

It carries out the reaction a D-aminoacyl-tRNA + H2O = a tRNA + a D-alpha-amino acid + H(+). The enzyme catalyses glycyl-tRNA(Ala) + H2O = tRNA(Ala) + glycine + H(+). Functionally, D-aminoacyl-tRNA deacylase with broad substrate specificity. By recycling D-aminoacyl-tRNA to D-amino acids and free tRNA molecules, this enzyme counteracts the toxicity associated with the formation of D-aminoacyl-tRNA entities in vivo. This is D-aminoacyl-tRNA deacylase from Methanocaldococcus jannaschii (strain ATCC 43067 / DSM 2661 / JAL-1 / JCM 10045 / NBRC 100440) (Methanococcus jannaschii).